A 336-amino-acid polypeptide reads, in one-letter code: MKSLGEFIIEKQAEYPQAKGSLSGILSAVRRAAKIINRDINRAGVVSDLVLGSMGRENVQGETQMKLDVFAHEAMKAAFYSRDDIAGFASEEEEEFTAFDTERGHNAKYIILMDPLDGSSNIDVNVSVGSIFSIYHRVTPIGTPVTLEDFLQPGHKQIAAGYIIYGSSTMLVFTTGNGVNGFTYDPSLGTFLLSHENIKIPKDGAIYSINEGGYLKFPQGIKKYIKYCQEDAPEEHRPYKSRYIGSLVADFHRNMLKGGVYMYPQASNYPNGKLRLSYECNPMAFIAEQAGGVATTGHERILDIQPQALHQRTPFIVGSEHMVNKIKDFIAQYPDN.

The Mg(2+) site is built by glutamate 91, aspartate 114, leucine 116, and aspartate 117. Residues 117–120, asparagine 210, tyrosine 243, and lysine 273 contribute to the substrate site; that span reads DGSS. Glutamate 279 provides a ligand contact to Mg(2+).

The protein belongs to the FBPase class 1 family. Homotetramer. Requires Mg(2+) as cofactor.

The protein resides in the cytoplasm. It catalyses the reaction beta-D-fructose 1,6-bisphosphate + H2O = beta-D-fructose 6-phosphate + phosphate. It functions in the pathway carbohydrate biosynthesis; gluconeogenesis. The chain is Fructose-1,6-bisphosphatase class 1 from Dichelobacter nodosus (strain VCS1703A).